The primary structure comprises 307 residues: Mitochondrial thiamine pyrophosphate carrier 1 (307 aa).

Solcar repeat units follow at residues 13 to 95 (VSTT…IGSF), 105 to 190 (SPQL…IKIF), and 203 to 305 (PFTL…FMNK). 6 helical membrane-spanning segments follow: residues 19–36 (LVAG…IAPL), 76–96 (IMYI…GSFL), 108–126 (LYSC…LASY), 160–184 (MGFF…FGVY), 210–226 (LAGP…TFPL), and 280–297 (GVTM…ISLW).

It belongs to the mitochondrial carrier (TC 2.A.29) family.

The protein localises to the mitochondrion inner membrane. Functionally, mitochondrial transporter that mediates uptake of thiamine pyrophosphate (ThPP) into mitochondria. This Candida glabrata (strain ATCC 2001 / BCRC 20586 / JCM 3761 / NBRC 0622 / NRRL Y-65 / CBS 138) (Yeast) protein is Mitochondrial thiamine pyrophosphate carrier 1 (TPC1).